We begin with the raw amino-acid sequence, 442 residues long: MQSSASRCGRALVALLLACGLLGVWGEKRGFPPAQATPSLLGTKEVMTPPTKTSWTRGSNSSLMRSSAPAEVTKGGRVAGVPPRSFPPPCQRKIEINKTFKYINTIVSCLVFVLGIIGNSTLLRIIYKNKCMRNGPNILIASLALGDLLHIIIDIPINAYKLLAGDWPFGAEMCKLVPFIQKASVGITVLSLCALSIDRYRAVASWSRIKGIGVPKWTAVEIVLIWVVSVVLAVPEAIGFDVITSDYKGKPLRVCMLNPFQKTAFMQFYKTAKDWWLFSFYFCLPLAITAIFYTLMTCEMLRKKSGMQIALNDHLKQRREVAKTVFCLVLVFALCWLPLHLSRILKLTLYDQSNPQRCELLSFLLVLDYIGINMASLNSCINPIALYLVSKRFKNCFKSCLCCWCQTFEEKQSLEEKQSCLKFKANDHGYDNFRSSNKYSSS.

A signal peptide spans 1 to 26 (MQSSASRCGRALVALLLACGLLGVWG). Over 27–101 (EKRGFPPAQA…RKIEINKTFK (75 aa)) the chain is Extracellular. N60 and N97 each carry an N-linked (GlcNAc...) asparagine glycan. A helical membrane pass occupies residues 102 to 126 (YINTIVSCLVFVLGIIGNSTLLRII). Residues 127-137 (YKNKCMRNGPN) are Cytoplasmic-facing. A helical transmembrane segment spans residues 138-163 (ILIASLALGDLLHIIIDIPINAYKLL). Over 164–175 (AGDWPFGAEMCK) the chain is Extracellular. C174 and C255 are joined by a disulfide. A helical transmembrane segment spans residues 176 to 197 (LVPFIQKASVGITVLSLCALSI). The Cytoplasmic segment spans residues 198 to 218 (DRYRAVASWSRIKGIGVPKWT). Residues 219 to 243 (AVEIVLIWVVSVVLAVPEAIGFDVI) form a helical membrane-spanning segment. Over 244–271 (TSDYKGKPLRVCMLNPFQKTAFMQFYKT) the chain is Extracellular. The chain crosses the membrane as a helical span at residues 272-296 (AKDWWLFSFYFCLPLAITAIFYTLM). The Cytoplasmic segment spans residues 297–324 (TCEMLRKKSGMQIALNDHLKQRREVAKT). A Phosphoserine modification is found at S305. A helical membrane pass occupies residues 325–350 (VFCLVLVFALCWLPLHLSRILKLTLY). Residues 351-362 (DQSNPQRCELLS) are Extracellular-facing. Residues 363-389 (FLLVLDYIGINMASLNSCINPIALYLV) form a helical membrane-spanning segment. Residues 390 to 442 (SKRFKNCFKSCLCCWCQTFEEKQSLEEKQSCLKFKANDHGYDNFRSSNKYSSS) are Cytoplasmic-facing. 3 S-palmitoyl cysteine lipidation sites follow: C402, C403, and C405. Position 419 is a phosphoserine (S419). Y439 is modified (phosphotyrosine). 3 positions are modified to phosphoserine: S440, S441, and S442.

Belongs to the G-protein coupled receptor 1 family. Endothelin receptor subfamily. EDNRB sub-subfamily. In terms of tissue distribution, widely distributed in cell types of a variety of tissues.

Its subcellular location is the cell membrane. Functionally, non-specific receptor for endothelin 1, 2, and 3. Mediates its action by association with G proteins that activate a phosphatidylinositol-calcium second messenger system. The sequence is that of Endothelin receptor type B from Rattus norvegicus (Rat).